Reading from the N-terminus, the 273-residue chain is Dermonecrotic toxin LvSicTox-alphaIC1ai (273 aa).

Residue His-5 is part of the active site. Mg(2+)-binding residues include Glu-25 and Asp-27. Catalysis depends on His-41, which acts as the Nucleophile. 2 disulfides stabilise this stretch: Cys-45/Cys-51 and Cys-47/Cys-190. Mg(2+) is bound at residue Asp-85.

The protein belongs to the arthropod phospholipase D family. Class II subfamily. Mg(2+) serves as cofactor. As to expression, expressed by the venom gland.

Its subcellular location is the secreted. The enzyme catalyses an N-(acyl)-sphingosylphosphocholine = an N-(acyl)-sphingosyl-1,3-cyclic phosphate + choline. The catalysed reaction is an N-(acyl)-sphingosylphosphoethanolamine = an N-(acyl)-sphingosyl-1,3-cyclic phosphate + ethanolamine. It catalyses the reaction a 1-acyl-sn-glycero-3-phosphocholine = a 1-acyl-sn-glycero-2,3-cyclic phosphate + choline. It carries out the reaction a 1-acyl-sn-glycero-3-phosphoethanolamine = a 1-acyl-sn-glycero-2,3-cyclic phosphate + ethanolamine. In terms of biological role, dermonecrotic toxins cleave the phosphodiester linkage between the phosphate and headgroup of certain phospholipids (sphingolipid and lysolipid substrates), forming an alcohol (often choline) and a cyclic phosphate. This toxin acts on sphingomyelin (SM). It may also act on ceramide phosphoethanolamine (CPE), lysophosphatidylcholine (LPC) and lysophosphatidylethanolamine (LPE), but not on lysophosphatidylserine (LPS), and lysophosphatidylglycerol (LPG). It acts by transphosphatidylation, releasing exclusively cyclic phosphate products as second products. Induces dermonecrosis, hemolysis, increased vascular permeability, edema, inflammatory response, and platelet aggregation. In Loxosceles variegata (Recluse spider), this protein is Dermonecrotic toxin LvSicTox-alphaIC1ai.